A 172-amino-acid polypeptide reads, in one-letter code: Lipoprotein signal peptidase (172 aa).

Helical transmembrane passes span 10 to 30 (LIWL…KAWV), 68 to 88 (WQLW…AFWL), and 98 to 118 (SALP…DRLM). Active-site residues include Asp124 and Asp142. Residues 138-158 (FNIADSAIVGGAIGIAVFGLF) form a helical membrane-spanning segment.

Belongs to the peptidase A8 family.

The protein localises to the cell inner membrane. The catalysed reaction is Release of signal peptides from bacterial membrane prolipoproteins. Hydrolyzes -Xaa-Yaa-Zaa-|-(S,diacylglyceryl)Cys-, in which Xaa is hydrophobic (preferably Leu), and Yaa (Ala or Ser) and Zaa (Gly or Ala) have small, neutral side chains.. Its pathway is protein modification; lipoprotein biosynthesis (signal peptide cleavage). In terms of biological role, this protein specifically catalyzes the removal of signal peptides from prolipoproteins. The chain is Lipoprotein signal peptidase from Xanthomonas euvesicatoria pv. vesicatoria (strain 85-10) (Xanthomonas campestris pv. vesicatoria).